Consider the following 358-residue polypeptide: MQKNDDLLRERRKDEHVALGVKQNEQLAPSSLKDIQLIGTSIPRYNVKDIDLTTTIFGKNVPFPFYINAMTGGSRHTKKINAELAEIAREVAIPMAVGSQSAALKNSSLIDTYNIVREINPNGMILANVSPEVAIQDGLQAIEMLEANALQIHINPAQELVMQEGDRSFSHWLTRIEEYVKLSPVPIVVKEVGFGMTRETVKTLADIGVQTVDLAGKGGTNFAQIENDRRRDQAYDFLLDWGISTGQALIDMQHQDAPKIAYLASGGIRNPLDIIKALALGADSVGMAGQIIYSLKKEGVTKTIEKLELWKEQLRGLFVLANAKNIAELKTTPLIVSGELAKWGTLREINLVKLANRK.

Position 12–13 (12–13) interacts with substrate; sequence RK. FMN-binding positions include 69–71, Ser-99, and Asn-128; that span reads AMT. Gln-158 provides a ligand contact to substrate. Glu-159 contributes to the Mg(2+) binding site. FMN-binding positions include Lys-190, Thr-220, 267-269, and 288-289; these read GIR and AG.

This sequence belongs to the IPP isomerase type 2 family. In terms of assembly, homooctamer. Dimer of tetramers. FMN serves as cofactor. Requires NADPH as cofactor. The cofactor is Mg(2+).

Its subcellular location is the cytoplasm. It catalyses the reaction isopentenyl diphosphate = dimethylallyl diphosphate. Involved in the biosynthesis of isoprenoids. Catalyzes the 1,3-allylic rearrangement of the homoallylic substrate isopentenyl (IPP) to its allylic isomer, dimethylallyl diphosphate (DMAPP). The protein is Isopentenyl-diphosphate delta-isomerase of Listeria monocytogenes serovar 1/2a (strain ATCC BAA-679 / EGD-e).